The following is a 702-amino-acid chain: Elongation factor G 2 (702 aa).

Residues 8–285 form the tr-type G domain; it reads DMVRNIGISA…AVTYYLPSPA (278 aa). GTP is bound by residues 17-24, 84-88, and 138-141; these read AHIDSGKT, DTPGH, and NKLD.

It belongs to the TRAFAC class translation factor GTPase superfamily. Classic translation factor GTPase family. EF-G/EF-2 subfamily.

Its subcellular location is the cytoplasm. Functionally, catalyzes the GTP-dependent ribosomal translocation step during translation elongation. During this step, the ribosome changes from the pre-translocational (PRE) to the post-translocational (POST) state as the newly formed A-site-bound peptidyl-tRNA and P-site-bound deacylated tRNA move to the P and E sites, respectively. Catalyzes the coordinated movement of the two tRNA molecules, the mRNA and conformational changes in the ribosome. This is Elongation factor G 2 from Bdellovibrio bacteriovorus (strain ATCC 15356 / DSM 50701 / NCIMB 9529 / HD100).